The following is a 431-amino-acid chain: Adenylosuccinate lyase (431 aa).

N(6)-(1,2-dicarboxyethyl)-AMP contacts are provided by residues 4-5 (RY), 67-69 (RHD), and 93-94 (TS). The active-site Proton donor/acceptor is the His141. A N(6)-(1,2-dicarboxyethyl)-AMP-binding site is contributed by Gln212. Ser262 serves as the catalytic Proton donor/acceptor. N(6)-(1,2-dicarboxyethyl)-AMP is bound by residues Ser263, 268–270 (KRN), Asn276, and 307–311 (SAERI).

The protein belongs to the lyase 1 family. Adenylosuccinate lyase subfamily. Homodimer and homotetramer. Residues from neighboring subunits contribute catalytic and substrate-binding residues to each active site.

The enzyme catalyses N(6)-(1,2-dicarboxyethyl)-AMP = fumarate + AMP. The catalysed reaction is (2S)-2-[5-amino-1-(5-phospho-beta-D-ribosyl)imidazole-4-carboxamido]succinate = 5-amino-1-(5-phospho-beta-D-ribosyl)imidazole-4-carboxamide + fumarate. It functions in the pathway purine metabolism; AMP biosynthesis via de novo pathway; AMP from IMP: step 2/2. Its pathway is purine metabolism; IMP biosynthesis via de novo pathway; 5-amino-1-(5-phospho-D-ribosyl)imidazole-4-carboxamide from 5-amino-1-(5-phospho-D-ribosyl)imidazole-4-carboxylate: step 2/2. Catalyzes two reactions in de novo purine nucleotide biosynthesis. Catalyzes the breakdown of 5-aminoimidazole- (N-succinylocarboxamide) ribotide (SAICAR or 2-[5-amino-1-(5-phospho-beta-D-ribosyl)imidazole-4-carboxamido]succinate) to 5-aminoimidazole-4-carboxamide ribotide (AICAR or 5-amino-1-(5-phospho-beta-D-ribosyl)imidazole-4-carboxamide) and fumarate, and of adenylosuccinate (ADS or N(6)-(1,2-dicarboxyethyl)-AMP) to adenosine monophosphate (AMP) and fumarate. In Staphylococcus aureus (strain USA300), this protein is Adenylosuccinate lyase (purB).